The chain runs to 66 residues: Large ribosomal subunit protein uL29 (66 aa).

The protein belongs to the universal ribosomal protein uL29 family.

The chain is Large ribosomal subunit protein uL29 from Bartonella quintana (strain Toulouse) (Rochalimaea quintana).